A 60-amino-acid chain; its full sequence is Large ribosomal subunit protein uL30 (60 aa).

The protein belongs to the universal ribosomal protein uL30 family. In terms of assembly, part of the 50S ribosomal subunit.

This chain is Large ribosomal subunit protein uL30, found in Syntrophomonas wolfei subsp. wolfei (strain DSM 2245B / Goettingen).